The chain runs to 118 residues: UPF0102 protein NE0711 (118 aa).

The protein belongs to the UPF0102 family.

The sequence is that of UPF0102 protein NE0711 from Nitrosomonas europaea (strain ATCC 19718 / CIP 103999 / KCTC 2705 / NBRC 14298).